We begin with the raw amino-acid sequence, 193 residues long: Segregation and condensation protein B (193 aa).

The protein belongs to the ScpB family. Homodimer. Homodimerization may be required to stabilize the binding of ScpA to the Smc head domains. Component of a cohesin-like complex composed of ScpA, ScpB and the Smc homodimer, in which ScpA and ScpB bind to the head domain of Smc. The presence of the three proteins is required for the association of the complex with DNA.

It localises to the cytoplasm. Participates in chromosomal partition during cell division. May act via the formation of a condensin-like complex containing Smc and ScpA that pull DNA away from mid-cell into both cell halves. The polypeptide is Segregation and condensation protein B (Clostridium botulinum (strain 657 / Type Ba4)).